The sequence spans 614 residues: UvrABC system protein C (614 aa).

Residues 26 to 104 (NLPGVYKMLG…IKEYRPPYNV (79 aa)) form the GIY-YIG domain. The UVR domain occupies 215 to 250 (SDIHTALIEKMEASAEELDFEKAVFYRDQLSMLREV).

It belongs to the UvrC family. As to quaternary structure, interacts with UvrB in an incision complex.

The protein resides in the cytoplasm. The UvrABC repair system catalyzes the recognition and processing of DNA lesions. UvrC both incises the 5' and 3' sides of the lesion. The N-terminal half is responsible for the 3' incision and the C-terminal half is responsible for the 5' incision. This Psychrobacter cryohalolentis (strain ATCC BAA-1226 / DSM 17306 / VKM B-2378 / K5) protein is UvrABC system protein C.